Reading from the N-terminus, the 231-residue chain is PIAGSMVLAAILLKLGGYGIIRIMQTLPTTKTDLFIPFITLALWGATLANLTCLQQTDLKSLIAYSSISHMGLVVAAITIQTPWGLSGAMALMIAHGFTSSALFCLANTTYERTHTRVLILTRGLHNILPMATTWWLLTNLMNIATPPTLNFTSELLIMSSLFNWCPTTIILLGLSMLITASYSLHMFLSTQAGPTLLNNQTEPTHSREHLLMALHLIPLMLISMKPELII.

6 helical membrane passes run 1 to 21 (PIAGSMVLAAILLKLGGYGII), 34 to 54 (LFIPFITLALWGATLANLTCL), 61 to 80 (SLIAYSSISHMGLVVAAITI), 84 to 106 (WGLSGAMALMIAHGFTSSALFCL), 118 to 138 (VLILTRGLHNILPMATTWWLL), and 156 to 178 (LLIMSSLFNWCPTTIILLGLSML).

It belongs to the complex I subunit 4 family.

It localises to the mitochondrion membrane. It catalyses the reaction a ubiquinone + NADH + 5 H(+)(in) = a ubiquinol + NAD(+) + 4 H(+)(out). In terms of biological role, core subunit of the mitochondrial membrane respiratory chain NADH dehydrogenase (Complex I) that is believed to belong to the minimal assembly required for catalysis. Complex I functions in the transfer of electrons from NADH to the respiratory chain. The immediate electron acceptor for the enzyme is believed to be ubiquinone. This chain is NADH-ubiquinone oxidoreductase chain 4 (MT-ND4), found in Azemiops feae (Fea's viper).